Consider the following 470-residue polypeptide: Argininosuccinate lyase (470 aa).

It belongs to the lyase 1 family. Argininosuccinate lyase subfamily.

The protein localises to the cytoplasm. It catalyses the reaction 2-(N(omega)-L-arginino)succinate = fumarate + L-arginine. The protein operates within amino-acid biosynthesis; L-arginine biosynthesis; L-arginine from L-ornithine and carbamoyl phosphate: step 3/3. This is Argininosuccinate lyase from Prochlorococcus marinus (strain MIT 9303).